We begin with the raw amino-acid sequence, 179 residues long: CDP-archaeol synthase (179 aa).

4 helical membrane passes run 53-73 (FVGGVAGGVLTANLQYAIEKL), 88-108 (FTLTFLLAFGAMFGDLCGSFI), 120-140 (FLIVDQLMFLLVALLIASLYP), and 145-165 (LFTAEIIALAVIITPALHMGI).

It belongs to the CDP-archaeol synthase family. Requires Mg(2+) as cofactor.

It localises to the cell membrane. The enzyme catalyses 2,3-bis-O-(geranylgeranyl)-sn-glycerol 1-phosphate + CTP + H(+) = CDP-2,3-bis-O-(geranylgeranyl)-sn-glycerol + diphosphate. It participates in membrane lipid metabolism; glycerophospholipid metabolism. Catalyzes the formation of CDP-2,3-bis-(O-geranylgeranyl)-sn-glycerol (CDP-archaeol) from 2,3-bis-(O-geranylgeranyl)-sn-glycerol 1-phosphate (DGGGP) and CTP. This reaction is the third ether-bond-formation step in the biosynthesis of archaeal membrane lipids. Can use CTP or dCTP, but not ATP, GTP or TTP. The chain is CDP-archaeol synthase from Archaeoglobus fulgidus (strain ATCC 49558 / DSM 4304 / JCM 9628 / NBRC 100126 / VC-16).